Here is a 131-residue protein sequence, read N- to C-terminus: Small ribosomal subunit protein bS16 (131 aa).

The tract at residues 87–131 is disordered; it reads PGAEGTYRVPTANTKPPRIPGGGAAKAVEAPAEAPAEAETPASES. Residues 111 to 131 are compositionally biased toward low complexity; the sequence is AKAVEAPAEAPAEAETPASES.

It belongs to the bacterial ribosomal protein bS16 family.

The chain is Small ribosomal subunit protein bS16 from Kineococcus radiotolerans (strain ATCC BAA-149 / DSM 14245 / SRS30216).